We begin with the raw amino-acid sequence, 222 residues long: Small ribosomal subunit protein uS3 (222 aa).

The 70-residue stretch at 39–108 (IRKFVKNKLS…NVLINIVEVK (70 aa)) folds into the KH type-2 domain.

Belongs to the universal ribosomal protein uS3 family. Part of the 30S ribosomal subunit. Forms a tight complex with proteins S10 and S14.

In terms of biological role, binds the lower part of the 30S subunit head. Binds mRNA in the 70S ribosome, positioning it for translation. The protein is Small ribosomal subunit protein uS3 of Clostridium acetobutylicum (strain ATCC 824 / DSM 792 / JCM 1419 / IAM 19013 / LMG 5710 / NBRC 13948 / NRRL B-527 / VKM B-1787 / 2291 / W).